The following is a 377-amino-acid chain: DNA-directed RNA polymerase subunit alpha (377 aa).

The interval 1–259 is alpha N-terminal domain (alpha-NTD); sequence MSDSSHNLLY…KHFSVFEKMD (259 aa). Residues 276-377 form an alpha C-terminal domain (alpha-CTD) region; the sequence is KDDILHKLVL…KIRSSKNTKG (102 aa).

This sequence belongs to the RNA polymerase alpha chain family. Homodimer. The RNAP catalytic core consists of 2 alpha, 1 beta, 1 beta' and 1 omega subunit. When a sigma factor is associated with the core the holoenzyme is formed, which can initiate transcription.

The catalysed reaction is RNA(n) + a ribonucleoside 5'-triphosphate = RNA(n+1) + diphosphate. DNA-dependent RNA polymerase catalyzes the transcription of DNA into RNA using the four ribonucleoside triphosphates as substrates. The protein is DNA-directed RNA polymerase subunit alpha of Chlamydia trachomatis serovar D (strain ATCC VR-885 / DSM 19411 / UW-3/Cx).